We begin with the raw amino-acid sequence, 260 residues long: Ribosomal RNA small subunit methyltransferase G (260 aa).

S-adenosyl-L-methionine contacts are provided by residues glycine 94, phenylalanine 99, 117 to 119, 145 to 146, and arginine 164; these read DST and AE. Residues 236 to 260 form a disordered region; sequence APTPPPYPRSPGTPKRQPLGQSNRP. A compositionally biased stretch (pro residues) spans 237–246; the sequence is PTPPPYPRSP.

Belongs to the methyltransferase superfamily. RNA methyltransferase RsmG family.

It is found in the cytoplasm. Specifically methylates the N7 position of a guanine in 16S rRNA. This chain is Ribosomal RNA small subunit methyltransferase G, found in Synechococcus sp. (strain JA-2-3B'a(2-13)) (Cyanobacteria bacterium Yellowstone B-Prime).